We begin with the raw amino-acid sequence, 360 residues long: GDSL esterase/lipase At1g58430 (360 aa).

An N-terminal signal peptide occupies residues 1 to 23 (MWTSKTISFTLFITTTLLGSCNA). Residue asparagine 22 is glycosylated (N-linked (GlcNAc...) asparagine). Serine 42 serves as the catalytic Nucleophile. Asparagine 104 and asparagine 326 each carry an N-linked (GlcNAc...) asparagine glycan. Catalysis depends on residues aspartate 334 and histidine 337.

Belongs to the 'GDSL' lipolytic enzyme family.

It localises to the secreted. The protein is GDSL esterase/lipase At1g58430 of Arabidopsis thaliana (Mouse-ear cress).